A 311-amino-acid chain; its full sequence is Aspartate carbamoyltransferase catalytic subunit (311 aa).

Arg55 and Thr56 together coordinate carbamoyl phosphate. Lys85 is a binding site for L-aspartate. Arg106, His135, and Gln138 together coordinate carbamoyl phosphate. The L-aspartate site is built by Arg168 and Arg230. Carbamoyl phosphate-binding residues include Leu268 and Pro269.

It belongs to the aspartate/ornithine carbamoyltransferase superfamily. ATCase family. Heterododecamer (2C3:3R2) of six catalytic PyrB chains organized as two trimers (C3), and six regulatory PyrI chains organized as three dimers (R2).

It catalyses the reaction carbamoyl phosphate + L-aspartate = N-carbamoyl-L-aspartate + phosphate + H(+). It functions in the pathway pyrimidine metabolism; UMP biosynthesis via de novo pathway; (S)-dihydroorotate from bicarbonate: step 2/3. In terms of biological role, catalyzes the condensation of carbamoyl phosphate and aspartate to form carbamoyl aspartate and inorganic phosphate, the committed step in the de novo pyrimidine nucleotide biosynthesis pathway. The polypeptide is Aspartate carbamoyltransferase catalytic subunit (Pectobacterium carotovorum subsp. carotovorum (strain PC1)).